Reading from the N-terminus, the 554-residue chain is MMLSRAKPAVGGESPHTDKRKKKGRKIPKLEDLLSQRDFTGAITLLEFKRHVGEQEDDTNLWIGYCAFHLGDYKRALEEYENATKEENCNPEVWVNLACTYFFLGMYKQAEAAGFKAPKSRLQNRLLFHLAHKFNDEKKLMNFHQNLQDIKEDQLSLASIHYMRSHYQEAIDIYKRILLDNREYLALNVYVALCYYKLDYYDVSQEVLAVYLQQIPDSTIALNLKACNHFRLYNGKAAEAELKSLMDNASSPFEFAKELIRHNLVVFRGGEGALQVLPPLVDVIPEARLNLVIYYLRQDDVQEAYNLIKDLEPTTPQEYILKGVVNAALGQEMGSRDHMKIAQQFFQLVGGSASECDTIPGRQCMASCFFLLKQFDDVLIYLNSFKSYFYNDDIFNFNYAQAKAATGNTSEGEEVFLLIQSEKLKNDYIYLSWLARCYIMNKKPRLAWELYLKMETSGESFSLLQLIANDCYKMGQFYYSAKAFDVLERLDPNPEYWEGKRGACVGIFQMILAGREPKETLREVLHLLRSTGNTQVEYIIRIMKKWAKENRVPI.

Residues 1-27 (MMLSRAKPAVGGESPHTDKRKKKGRKI) are disordered. The span at 18–27 (DKRKKKGRKI) shows a compositional bias: basic residues. TPR repeat units lie at residues 57-90 (DDTN…ENCN), 92-125 (EVWV…LQNR), 151-184 (KEDQ…NREY), and 468-501 (ANDC…EGKR).

Belongs to the IFT56 family. Component of the IFT complex B. Interacts with IFT46; the interaction is direct. As to expression, high expression detected in testis. Detected also retina, kidney, lung and brain tissue. The expression level is low in spleen. Expressed in the developing liver. Present in the airway epithelial cells and the testes (at protein level).

It is found in the cell projection. Its subcellular location is the cilium. In terms of biological role, component of the intraflagellar transport (IFT) complex B required for transport of proteins in the motile cilium. Required for transport of specific ciliary cargo proteins related to motility, while it is neither required for IFT complex B assembly or motion nor for cilium assembly. Required for efficient coupling between the accumulation of GLI2 and GLI3 at the ciliary tips and their dissociation from the negative regulator SUFU. Plays a key role in maintaining the integrity of the IFT complex B and the proper ciliary localization of the IFT complex B components. Not required for IFT complex A ciliary localization or function. Essential for maintaining proper microtubule organization within the ciliary axoneme. In Mus musculus (Mouse), this protein is Intraflagellar transport protein 56.